Consider the following 462-residue polypeptide: uncharacterized protein (462 aa).

A TRAM domain is found at 12 to 70 (MLKKNDIIQVAISDLSHEGAGVAKHDGFVFFVDNALPEEVIDMRVLKVNKNSGFGKVEA). Residues Gln294, Tyr323, Glu344, and Asp392 each coordinate S-adenosyl-L-methionine. The active-site Nucleophile is the Cys419.

This sequence belongs to the class I-like SAM-binding methyltransferase superfamily. RNA M5U methyltransferase family.

This is an uncharacterized protein from Streptococcus pyogenes serotype M3 (strain ATCC BAA-595 / MGAS315).